The following is a 428-amino-acid chain: Gamma-glutamyl phosphate reductase (428 aa).

This sequence belongs to the gamma-glutamyl phosphate reductase family.

The protein resides in the cytoplasm. The catalysed reaction is L-glutamate 5-semialdehyde + phosphate + NADP(+) = L-glutamyl 5-phosphate + NADPH + H(+). It functions in the pathway amino-acid biosynthesis; L-proline biosynthesis; L-glutamate 5-semialdehyde from L-glutamate: step 2/2. Catalyzes the NADPH-dependent reduction of L-glutamate 5-phosphate into L-glutamate 5-semialdehyde and phosphate. The product spontaneously undergoes cyclization to form 1-pyrroline-5-carboxylate. This Anaeromyxobacter sp. (strain Fw109-5) protein is Gamma-glutamyl phosphate reductase.